A 379-amino-acid chain; its full sequence is Queuine tRNA-ribosyltransferase (379 aa).

The Proton acceptor role is filled by aspartate 94. Substrate-binding positions include 94–98, aspartate 148, glutamine 191, and glycine 218; that span reads DSGGF. The segment at 249–255 is RNA binding; it reads GVGSPDS. Aspartate 268 serves as the catalytic Nucleophile. The RNA binding; important for wobble base 34 recognition stretch occupies residues 273 to 277; the sequence is TRIAR. Cysteine 306, cysteine 308, cysteine 311, and histidine 337 together coordinate Zn(2+).

It belongs to the queuine tRNA-ribosyltransferase family. In terms of assembly, homodimer. Within each dimer, one monomer is responsible for RNA recognition and catalysis, while the other monomer binds to the replacement base PreQ1. Zn(2+) serves as cofactor.

The catalysed reaction is 7-aminomethyl-7-carbaguanine + guanosine(34) in tRNA = 7-aminomethyl-7-carbaguanosine(34) in tRNA + guanine. Its pathway is tRNA modification; tRNA-queuosine biosynthesis. In terms of biological role, catalyzes the base-exchange of a guanine (G) residue with the queuine precursor 7-aminomethyl-7-deazaguanine (PreQ1) at position 34 (anticodon wobble position) in tRNAs with GU(N) anticodons (tRNA-Asp, -Asn, -His and -Tyr). Catalysis occurs through a double-displacement mechanism. The nucleophile active site attacks the C1' of nucleotide 34 to detach the guanine base from the RNA, forming a covalent enzyme-RNA intermediate. The proton acceptor active site deprotonates the incoming PreQ1, allowing a nucleophilic attack on the C1' of the ribose to form the product. After dissociation, two additional enzymatic reactions on the tRNA convert PreQ1 to queuine (Q), resulting in the hypermodified nucleoside queuosine (7-(((4,5-cis-dihydroxy-2-cyclopenten-1-yl)amino)methyl)-7-deazaguanosine). This is Queuine tRNA-ribosyltransferase from Listeria innocua serovar 6a (strain ATCC BAA-680 / CLIP 11262).